The following is a 999-amino-acid chain: Probable K(+)/H(+) antiporter subunit A/B (999 aa).

The interval 1–20 (MTRPASVLAGPKSRPPIHSQ) is disordered. 24 helical membrane-spanning segments follow: residues 31-48 (LLSV…IAIF), 63-85 (AIAL…GGVL), 106-128 (FAWL…ARYY), 138-160 (FFAL…NLIL), 162-181 (AVFW…YWHH), 191-213 (MALT…IGKI), 233-255 (PLYG…QFPF), 270-292 (SAYL…FWPV), 299-321 (WFWI…AIFQ), 336-358 (LGLI…VFHI), 389-411 (GLFH…MAGV), 442-464 (YVAT…GVFF), 488-510 (FLVL…FLHT), 530-552 (GWNI…YFLM), 604-621 (RLLV…LLLG), 636-653 (AFAL…GSAY), 660-682 (LASL…WLSA), 686-708 (AVTQ…RWLP), 729-751 (LRDL…TVMT), 788-807 (TLGE…ALLL), 846-868 (FIPA…FLFL), 878-900 (FAAG…TRWV), 913-935 (SIGL…PFLT), and 955-977 (ILFD…IALA).

In the N-terminal section; belongs to the CPA3 antiporters (TC 2.A.63) subunit A family. It in the C-terminal section; belongs to the CPA3 antiporters (TC 2.A.63) subunit B family. In terms of assembly, may form a heterooligomeric complex that consists of six subunits: PhaAB, PhaC, PhaD, PhaE, PhaF and PhaG.

The protein resides in the cell membrane. In terms of biological role, part of a K(+) efflux system which is required for the adaptation of R.meliloti to alkaline pH as well as for the infection process during symbiotic nodule development. The chain is Probable K(+)/H(+) antiporter subunit A/B (phaAB) from Rhizobium meliloti (strain 1021) (Ensifer meliloti).